Here is an 880-residue protein sequence, read N- to C-terminus: Lon protease (880 aa).

A disordered region spans residues 1 to 37 (MADYNDKNYLLHMSGPDSDTGPGIENEDPRAVENPGH). The span at 27-37 (EDPRAVENPGH) shows a compositional bias: basic and acidic residues. One can recognise a Lon N-terminal domain in the interval 57-251 (LPILPVRDVV…LVNTQLQREV (195 aa)). Residue 404–411 (GPPGVGKT) coordinates ATP. Residues 640–821 (KLMPGMALGL…DELLPLVFEG (182 aa)) form the Lon proteolytic domain. Catalysis depends on residues Ser-727 and Lys-770. Over residues 826–836 (GGVSGAGQAGD) the composition is skewed to gly residues. Residues 826 to 880 (GGVSGAGQAGDKGGKSKAAAGKKDVVAARPAKPAAPARRRKDKTEDELPTAEAGA) are disordered. Residues 852–861 (AARPAKPAAP) are compositionally biased toward low complexity.

Belongs to the peptidase S16 family. Homohexamer. Organized in a ring with a central cavity.

The protein resides in the cytoplasm. The enzyme catalyses Hydrolysis of proteins in presence of ATP.. In terms of biological role, ATP-dependent serine protease that mediates the selective degradation of mutant and abnormal proteins as well as certain short-lived regulatory proteins. Required for cellular homeostasis and for survival from DNA damage and developmental changes induced by stress. Degrades polypeptides processively to yield small peptide fragments that are 5 to 10 amino acids long. Binds to DNA in a double-stranded, site-specific manner. The chain is Lon protease from Desulfovibrio desulfuricans (strain ATCC 27774 / DSM 6949 / MB).